A 353-amino-acid polypeptide reads, in one-letter code: Variable large protein 17 (353 aa).

Positions 1 to 18 (MRKRISAIIMTLFMVLVS) are cleaved as a signal peptide. A lipid anchor (N-palmitoyl cysteine) is attached at Cys19. Cys19 carries the S-diacylglycerol cysteine lipid modification. The disordered stretch occupies residues 332 to 353 (EDKSVEATNTAEATTSGQQAKN). The span at 337-353 (EATNTAEATTSGQQAKN) shows a compositional bias: polar residues.

Belongs to the variable large protein (Vlp) family. Delta subfamily.

The protein localises to the cell outer membrane. Its function is as follows. The Vlp and Vsp proteins are antigenically distinct proteins, only one vlp or vsp gene is transcriptionally active at any one time. Switching between these genes is a mechanism of host immune response evasion. This Borrelia hermsii protein is Variable large protein 17.